Reading from the N-terminus, the 210-residue chain is Large ribosomal subunit protein uL4 (210 aa).

The interval 44 to 77 (ARQGNASSKTRSEVRGGGRKPWRQKGTGRARAGS) is disordered. Over residues 60-71 (GGRKPWRQKGTG) the composition is skewed to basic residues.

Belongs to the universal ribosomal protein uL4 family. As to quaternary structure, part of the 50S ribosomal subunit.

Functionally, one of the primary rRNA binding proteins, this protein initially binds near the 5'-end of the 23S rRNA. It is important during the early stages of 50S assembly. It makes multiple contacts with different domains of the 23S rRNA in the assembled 50S subunit and ribosome. Forms part of the polypeptide exit tunnel. This chain is Large ribosomal subunit protein uL4, found in Microcystis aeruginosa (strain NIES-843 / IAM M-2473).